Here is a 282-residue protein sequence, read N- to C-terminus: Snake venom serine protease NaSP (282 aa).

Positions 1–18 are cleaved as a signal peptide; it reads MVLIRVLASLLILQLSYS. Residues 19–56 constitute a propeptide that is removed on maturation; that stretch reads KSLDDGAKESAYDDEIQQSSWGNSTVNTTLTETVVIQL. N-linked (GlcNAc...) asparagine glycosylation is found at asparagine 41 and asparagine 45. The 224-residue stretch at 57–280 folds into the Peptidase S1 domain; sequence IMGGSECYKS…YIDWIRGIIA (224 aa). 5 cysteine pairs are disulfide-bonded: cysteine 63–cysteine 195, cysteine 82–cysteine 98, cysteine 174–cysteine 241, cysteine 206–cysteine 220, and cysteine 231–cysteine 256. The Charge relay system role is filled by histidine 97. N-linked (GlcNAc...) asparagine glycosylation occurs at asparagine 135. The active-site Charge relay system is the aspartate 142. Residues asparagine 149 and asparagine 153 are each glycosylated (N-linked (GlcNAc...) asparagine). Residue serine 235 is the Charge relay system of the active site.

The protein belongs to the peptidase S1 family. Snake venom subfamily. Monomer. In terms of tissue distribution, expressed by the venom gland.

The protein resides in the secreted. Its function is as follows. Snake venom serine protease that may act in the hemostasis system of the prey. The protein is Snake venom serine protease NaSP of Naja atra (Chinese cobra).